A 501-amino-acid chain; its full sequence is Aspartyl/glutamyl-tRNA(Asn/Gln) amidotransferase subunit B (501 aa).

Residues 272–291 form a disordered region; sequence QETRHYQETDGTTSKGRPKE.

It belongs to the GatB/GatE family. GatB subfamily. As to quaternary structure, heterotrimer of A, B and C subunits.

The enzyme catalyses L-glutamyl-tRNA(Gln) + L-glutamine + ATP + H2O = L-glutaminyl-tRNA(Gln) + L-glutamate + ADP + phosphate + H(+). The catalysed reaction is L-aspartyl-tRNA(Asn) + L-glutamine + ATP + H2O = L-asparaginyl-tRNA(Asn) + L-glutamate + ADP + phosphate + 2 H(+). In terms of biological role, allows the formation of correctly charged Asn-tRNA(Asn) or Gln-tRNA(Gln) through the transamidation of misacylated Asp-tRNA(Asn) or Glu-tRNA(Gln) in organisms which lack either or both of asparaginyl-tRNA or glutaminyl-tRNA synthetases. The reaction takes place in the presence of glutamine and ATP through an activated phospho-Asp-tRNA(Asn) or phospho-Glu-tRNA(Gln). This Corynebacterium efficiens (strain DSM 44549 / YS-314 / AJ 12310 / JCM 11189 / NBRC 100395) protein is Aspartyl/glutamyl-tRNA(Asn/Gln) amidotransferase subunit B.